Reading from the N-terminus, the 495-residue chain is Tubulin epsilon and delta complex protein 1 (495 aa).

The stretch at G355–A387 forms a coiled coil. The tract at residues C417 to A440 is disordered. Positions I452–L480 form a coiled coil.

As to quaternary structure, interacts with TEDC2. Found in a complex with TEDC1, TEDC2, TUBE1 and TUBD1.

It localises to the cell projection. It is found in the cilium. The protein localises to the cytoplasm. Its subcellular location is the cytoskeleton. The protein resides in the microtubule organizing center. It localises to the centrosome. It is found in the centriole. Acts as a positive regulator of ciliary hedgehog signaling. Required for centriole stability. May play a role in counteracting perturbation of actin filaments, such as after treatment with the actin depolymerizing microbial metabolite Chivosazole F. The polypeptide is Tubulin epsilon and delta complex protein 1 (Homo sapiens (Human)).